Consider the following 339-residue polypeptide: 1-aminocyclopropane-1-carboxylate deaminase (339 aa).

Residue Lys52 is modified to N6-(pyridoxal phosphate)lysine. Ser79 functions as the Nucleophile in the catalytic mechanism.

The protein belongs to the ACC deaminase/D-cysteine desulfhydrase family. As to quaternary structure, homotrimer. It depends on pyridoxal 5'-phosphate as a cofactor.

The enzyme catalyses 1-aminocyclopropane-1-carboxylate + H2O = 2-oxobutanoate + NH4(+). Functionally, catalyzes a cyclopropane ring-opening reaction, the irreversible conversion of 1-aminocyclopropane-1-carboxylate (ACC) to ammonia and alpha-ketobutyrate. Allows growth on ACC as a nitrogen source. The protein is 1-aminocyclopropane-1-carboxylate deaminase of Rhizobium leguminosarum bv. viciae.